Consider the following 1325-residue polypeptide: Zinc finger MYM-type protein 6 (1325 aa).

8 MYM-type zinc fingers span residues 113-151 (QLFC…PKDV), 163-206 (KDFC…RFEV), 213-248 (HGLC…SSGP), 296-334 (ELFC…QYHL), 342-443 (YSFC…KPEL), 451-485 (FLFC…KETV), 492-531 (KPFC…LVEN), and 538-572 (EEFC…SESI). Serine 397 carries the post-translational modification Phosphoserine. A disordered region spans residues 665–733 (ESTQEDAMKF…NDAELDSPPS (69 aa)). A compositionally biased stretch (polar residues) spans 695 to 706 (PVTQTKATSCKP).

As to expression, expressed at high levels in heart, skeletal muscle, kidney and liver.

The protein localises to the nucleus. In terms of biological role, plays a role in the regulation of cell morphology and cytoskeletal organization. The polypeptide is Zinc finger MYM-type protein 6 (ZMYM6) (Homo sapiens (Human)).